A 94-amino-acid chain; its full sequence is Co-chaperonin GroES (94 aa).

The protein belongs to the GroES chaperonin family. Heptamer of 7 subunits arranged in a ring. Interacts with the chaperonin GroEL.

The protein resides in the cytoplasm. Its function is as follows. Together with the chaperonin GroEL, plays an essential role in assisting protein folding. The GroEL-GroES system forms a nano-cage that allows encapsulation of the non-native substrate proteins and provides a physical environment optimized to promote and accelerate protein folding. GroES binds to the apical surface of the GroEL ring, thereby capping the opening of the GroEL channel. The chain is Co-chaperonin GroES from Brevibacillus brevis (strain 47 / JCM 6285 / NBRC 100599).